The primary structure comprises 334 residues: Adenosine deaminase (334 aa).

Zn(2+)-binding residues include His-16 and His-18. Residues His-18, Asp-20, and Gly-173 each contribute to the substrate site. His-200 contacts Zn(2+). Glu-203 serves as the catalytic Proton donor. Asp-281 lines the Zn(2+) pocket.

The protein belongs to the metallo-dependent hydrolases superfamily. Adenosine and AMP deaminases family. Adenosine deaminase subfamily. Requires Zn(2+) as cofactor.

The enzyme catalyses adenosine + H2O + H(+) = inosine + NH4(+). It carries out the reaction 2'-deoxyadenosine + H2O + H(+) = 2'-deoxyinosine + NH4(+). Catalyzes the hydrolytic deamination of adenosine and 2-deoxyadenosine. The protein is Adenosine deaminase of Clostridium acetobutylicum (strain ATCC 824 / DSM 792 / JCM 1419 / IAM 19013 / LMG 5710 / NBRC 13948 / NRRL B-527 / VKM B-1787 / 2291 / W).